Consider the following 97-residue polypeptide: Citrate lyase acyl carrier protein (97 aa).

Serine 14 is subject to O-(phosphoribosyl dephospho-coenzyme A)serine.

This sequence belongs to the CitD family. In terms of assembly, oligomer with a subunit composition of (alpha,beta,gamma)6.

Its subcellular location is the cytoplasm. In terms of biological role, covalent carrier of the coenzyme of citrate lyase. The chain is Citrate lyase acyl carrier protein from Klebsiella pneumoniae subsp. pneumoniae (strain ATCC 700721 / MGH 78578).